The following is a 236-amino-acid chain: Purine nucleoside phosphorylase CA_C1699 (236 aa).

Zn(2+)-binding residues include histidine 62, cysteine 97, and histidine 114.

The protein belongs to the purine nucleoside phosphorylase YfiH/LACC1 family. As to quaternary structure, homodimer. The cofactor is Cu(2+). Zn(2+) serves as cofactor.

It carries out the reaction adenosine + phosphate = alpha-D-ribose 1-phosphate + adenine. It catalyses the reaction S-methyl-5'-thioadenosine + phosphate = 5-(methylsulfanyl)-alpha-D-ribose 1-phosphate + adenine. The enzyme catalyses inosine + phosphate = alpha-D-ribose 1-phosphate + hypoxanthine. The catalysed reaction is adenosine + H2O + H(+) = inosine + NH4(+). Purine nucleoside enzyme that catalyzes the phosphorolysis of adenosine and inosine nucleosides, yielding D-ribose 1-phosphate and the respective free bases, adenine and hypoxanthine. Also catalyzes the phosphorolysis of S-methyl-5'-thioadenosine into adenine and S-methyl-5-thio-alpha-D-ribose 1-phosphate. Also has adenosine deaminase activity. The chain is Purine nucleoside phosphorylase CA_C1699 from Clostridium acetobutylicum (strain ATCC 824 / DSM 792 / JCM 1419 / IAM 19013 / LMG 5710 / NBRC 13948 / NRRL B-527 / VKM B-1787 / 2291 / W).